Here is a 153-residue protein sequence, read N- to C-terminus: Endoribonuclease YbeY (153 aa).

Residues histidine 114, histidine 118, and histidine 124 each contribute to the Zn(2+) site.

It belongs to the endoribonuclease YbeY family. Zn(2+) is required as a cofactor.

The protein resides in the cytoplasm. Single strand-specific metallo-endoribonuclease involved in late-stage 70S ribosome quality control and in maturation of the 3' terminus of the 16S rRNA. This Shewanella denitrificans (strain OS217 / ATCC BAA-1090 / DSM 15013) protein is Endoribonuclease YbeY.